A 350-amino-acid polypeptide reads, in one-letter code: Ubiquitin carboxyl-terminal hydrolase 11 (350 aa).

In terms of domain architecture, USP spans 49 to 344 (KGLYNVSGND…SACLLFYEME (296 aa)). Residue Cys59 is the Nucleophile of the active site. His302 functions as the Proton acceptor in the catalytic mechanism.

This sequence belongs to the peptidase C19 family.

It catalyses the reaction Thiol-dependent hydrolysis of ester, thioester, amide, peptide and isopeptide bonds formed by the C-terminal Gly of ubiquitin (a 76-residue protein attached to proteins as an intracellular targeting signal).. The sequence is that of Ubiquitin carboxyl-terminal hydrolase 11 (ubp11) from Schizosaccharomyces pombe (strain 972 / ATCC 24843) (Fission yeast).